Here is a 339-residue protein sequence, read N- to C-terminus: MNNWKHNHVLDLSTFSLEDYKTVLELTTRFKDVHKSSSRKLPALHGRLIANLFFEPSTRTRTSFELAAKRLSADVQNFSVSSSSLNKGETPLDTILTYISMGADILVIRHESTNVPAELANYVDINNINTSILNAGDGFHSHPSQGLLDLFTLATFFNPNEPSTNSLLNKKITIVGDILHSRVARSNLWALTACGAEVTLCGPPSLLPEEFIDFVQNPPLGQNFDPINKRGSVFIKRSLKDALKNSDAVMTLRLQKERMKQNMLTDLDSYYVQYGITHESLKWCEKKVPVLHPGPVNRGVEISNRLVEDNSINLISKQVENGIPTRMALLYLLGLNKKD.

Carbamoyl phosphate-binding residues include Arg59 and Thr60. Lys87 is an L-aspartate binding site. Residues Arg109, His142, and Gln145 each coordinate carbamoyl phosphate. Arg182 and Arg253 together coordinate L-aspartate. Positions 294 and 295 each coordinate carbamoyl phosphate.

The protein belongs to the aspartate/ornithine carbamoyltransferase superfamily. ATCase family. Heterododecamer (2C3:3R2) of six catalytic PyrB chains organized as two trimers (C3), and six regulatory PyrI chains organized as three dimers (R2).

It catalyses the reaction carbamoyl phosphate + L-aspartate = N-carbamoyl-L-aspartate + phosphate + H(+). It functions in the pathway pyrimidine metabolism; UMP biosynthesis via de novo pathway; (S)-dihydroorotate from bicarbonate: step 2/3. Catalyzes the condensation of carbamoyl phosphate and aspartate to form carbamoyl aspartate and inorganic phosphate, the committed step in the de novo pyrimidine nucleotide biosynthesis pathway. In Prochlorococcus marinus (strain NATL2A), this protein is Aspartate carbamoyltransferase catalytic subunit.